Consider the following 443-residue polypeptide: Threonine/serine transporter TdcC (443 aa).

The next 11 membrane-spanning stretches (helical) occupy residues 22 to 42, 44 to 64, 97 to 117, 140 to 160, 163 to 183, 207 to 227, 259 to 279, 319 to 339, 366 to 386, 389 to 409, and 423 to 443; these read TTWT…FFPI, AGFG…PIAF, GVVI…IYGV, FVAL…KDLM, VMSF…LSLI, ILVT…FSPI, ASLL…FTLS, ASII…LGTL, ISMI…PNIL, IEAM…MFAI, and ENLF…YKLF.

This sequence belongs to the amino acid/polyamine transporter 2 family. SdaC/TdcC subfamily.

The protein localises to the cell inner membrane. The catalysed reaction is L-threonine(in) + H(+)(in) = L-threonine(out) + H(+)(out). It catalyses the reaction L-serine(in) + H(+)(in) = L-serine(out) + H(+)(out). Its function is as follows. Involved in the import of threonine and serine into the cell, with the concomitant import of a proton (symport system). The polypeptide is Threonine/serine transporter TdcC (Enterobacter sp. (strain 638)).